The primary structure comprises 441 residues: MTQTWNLLQTGQKEGYKIAYTNARIIDPETKLDIKGSLLTEGDKIVDFGESLFSTSGVDETIDCKGLVLMPGLIDIHVHFREPGQEHKETIYTGSKSAAAGGVTTVVCQPNTIPAIDSVVLAKYLKYRALETSHVNVEFYAKITTLEEKLTEMALLKEAGAVGFTDDGMPVMNPMIMRQALLYSSMLGVPIAQHAEDLNLSAGGAINEGKISEELGVKGILSASESVMVNRDILLMKDMENVHYHILHVSSKDSLDAIKRAKDLGLNVTCEVTPHHFTLTEDIVKQHGAIAKMNPPLRTEEDRLAMVEGLKTGVIDCIATDHAPHDRSSKDLPLENAAFGIVGLETMLPLSLELYHSGQMGLLDVLAKLTYKPADIIHIPRGRIQKNLAADLILVDLNHEWEIKTDNFASKSKNSPFDGRKVKGHVVRTVVSGKTIYSQKS.

Positions 77 and 79 each coordinate Zn(2+). Substrate contacts are provided by residues 79 to 81 and Asn-111; that span reads HFR. Zn(2+)-binding residues include Asp-167, His-194, and His-248. Asn-294 contacts substrate. Residue Asp-321 participates in Zn(2+) binding. The active site involves Asp-321. Substrate is bound by residues His-325 and 339-340; that span reads FG.

It belongs to the metallo-dependent hydrolases superfamily. DHOase family. Class I DHOase subfamily. The cofactor is Zn(2+).

The enzyme catalyses (S)-dihydroorotate + H2O = N-carbamoyl-L-aspartate + H(+). It functions in the pathway pyrimidine metabolism; UMP biosynthesis via de novo pathway; (S)-dihydroorotate from bicarbonate: step 3/3. In terms of biological role, catalyzes the reversible cyclization of carbamoyl aspartate to dihydroorotate. The polypeptide is Dihydroorotase (Wolbachia sp. subsp. Drosophila simulans (strain wRi)).